The primary structure comprises 110 residues: UPF0060 membrane protein Mfla_2554 (110 aa).

4 helical membrane passes run 7-27 (VALF…PYLW), 33-53 (SPLL…LLTL), 61-81 (VYAA…WVVD), and 83-103 (IIPS…MAII).

This sequence belongs to the UPF0060 family.

It is found in the cell inner membrane. The sequence is that of UPF0060 membrane protein Mfla_2554 from Methylobacillus flagellatus (strain ATCC 51484 / DSM 6875 / VKM B-1610 / KT).